Reading from the N-terminus, the 975-residue chain is Protein HIRA (975 aa).

WD repeat units lie at residues Arg10–Asp50, Asp64–Glu103, Gly123–Val162, Gly165–Arg204, Gly214–Asp256, Gly259–Val331, and Phe335–Arg374. The span at Lys418–Ser433 shows a compositional bias: low complexity. Disordered regions lie at residues Lys418–Asn510 and Asn948–Ser975. Over residues Asp435–Asn445 the composition is skewed to polar residues. Residues Lys478–Ile492 are compositionally biased toward basic and acidic residues. The span at Pro499 to Asn510 shows a compositional bias: polar residues. A coiled-coil region spans residues Ala923–Val954.

The protein belongs to the WD repeat HIR1 family.

The protein localises to the nucleus. Histone chaperone involved in maintining knox genes silencing throughout leaf development. This is Protein HIRA from Oryza sativa subsp. japonica (Rice).